Consider the following 215-residue polypeptide: Pyrrolidone-carboxylate peptidase (215 aa).

Catalysis depends on residues glutamate 78, cysteine 141, and histidine 165.

This sequence belongs to the peptidase C15 family. As to quaternary structure, homotetramer.

It localises to the cytoplasm. It catalyses the reaction Release of an N-terminal pyroglutamyl group from a polypeptide, the second amino acid generally not being Pro.. Its function is as follows. Removes 5-oxoproline from various penultimate amino acid residues except L-proline. This is Pyrrolidone-carboxylate peptidase from Streptococcus pyogenes serotype M12 (strain MGAS2096).